The primary structure comprises 488 residues: uncharacterized protein (488 aa).

The protein resides in the cytoplasm. Its subcellular location is the nucleus. This is an uncharacterized protein from Schizosaccharomyces pombe (strain 972 / ATCC 24843) (Fission yeast).